Consider the following 1230-residue polypeptide: Basic-leucine zipper transcription factor A (1230 aa).

4 disordered regions span residues Leu-65 to Asn-108, Leu-180 to Gln-233, Gln-270 to Gln-310, and His-422 to Asp-578. 5 stretches are compositionally biased toward low complexity: residues Asn-69–Asn-108, Asn-192–Gln-233, Gln-270–Pro-287, Pro-295–Gln-310, and His-422–His-447. Polar residues-rich tracts occupy residues Lys-448–Pro-458 and Thr-466–Gly-475. Positions Ser-476–Ser-503 are enriched in low complexity. Over residues Pro-523–His-537 the composition is skewed to basic residues. Positions Phe-541–Glu-554 are enriched in acidic residues. Residues Asp-555 to Asp-618 enclose the bZIP domain. The basic motif stretch occupies residues Lys-556–Lys-586. Over residues Arg-562–Asn-571 the composition is skewed to polar residues. The segment at Leu-590–Leu-604 is leucine-zipper. Residues Leu-728–Ile-753 adopt a coiled-coil conformation. Disordered stretches follow at residues Thr-772–Lys-869 and Asn-1025–Ile-1230. 2 stretches are compositionally biased toward low complexity: residues Asn-774–Pro-803 and Asn-810–Asn-831. Residues Ser-832–Gly-845 are compositionally biased toward basic residues. Polar residues predominate over residues Asn-1025–Asn-1042. Composition is skewed to low complexity over residues Asn-1052–Asn-1146 and Gln-1153–Ser-1193.

This sequence belongs to the bZIP family. Binds DNA as a dimer. Heterodimerizes with dimB; in vitro. Also able to form homodimer; in vitro.

The protein localises to the nucleus. Transcriptional regulator involved in DIF-1 signaling. DIF-1 (Differentiation Inducing Factor-1) is a signal molecule involved in the differentiation of pstO (prestalk-O) cells. Functions both as an activator of prestalk gene expression and a repressor of prespore gene expression. This is Basic-leucine zipper transcription factor A (dimA) from Dictyostelium discoideum (Social amoeba).